The primary structure comprises 273 residues: Urease accessory protein UreD (273 aa).

Positions 1-29 (MLMRTATPLDQPRAIGSARVSSKRVNGGS) are disordered.

This sequence belongs to the UreD family. As to quaternary structure, ureD, UreF and UreG form a complex that acts as a GTP-hydrolysis-dependent molecular chaperone, activating the urease apoprotein by helping to assemble the nickel containing metallocenter of UreC. The UreE protein probably delivers the nickel.

The protein localises to the cytoplasm. Required for maturation of urease via the functional incorporation of the urease nickel metallocenter. The polypeptide is Urease accessory protein UreD (Roseobacter denitrificans (strain ATCC 33942 / OCh 114) (Erythrobacter sp. (strain OCh 114))).